The following is a 219-amino-acid chain: ER lumen protein-retaining receptor (219 aa).

The Lumenal segment spans residues 1–5 (MNPFR). Residues 6–26 (ILGDLSHLTSILILIHNIKTT) traverse the membrane as a helical segment. The Cytoplasmic segment spans residues 27–37 (RYIEGISFKTQ). 2 helical membrane-spanning segments follow: residues 38 to 58 (TLYA…HWVS) and 59 to 79 (LYNA…VVLL). The Cytoplasmic segment spans residues 80 to 98 (QGSKRTNTIAYNEMLMHDT). A helical transmembrane segment spans residues 99–116 (FKIQHLLIGSALMSVFFH). At 117–118 (HK) the chain is on the lumenal side. The helical transmembrane segment at 119–139 (FTFLELAWSFSVWLESVAILP) threads the bilayer. The Cytoplasmic portion of the chain corresponds to 140–152 (QLYMLSKGGKTRS). A helical membrane pass occupies residues 153 to 173 (LTVHYIFAMGLYRALYIPNWI). Residues 174-185 (WRYSTEDKKLDK) are Lumenal-facing. The helical transmembrane segment at 186–206 (IAFFAGLLQTLLYSDFFYIYY) threads the bilayer. Topologically, residues 207–219 (TKVIRGKGFKLPK) are cytoplasmic.

The protein belongs to the ERD2 family.

The protein localises to the endoplasmic reticulum membrane. Its function is as follows. Required for the retention of luminal endoplasmic reticulum proteins. Determines the specificity of the luminal ER protein retention system. Also required for normal vesicular traffic through the Golgi. This receptor strongly recognizes H-D-E-L and weakly recognizes D-D-E-L and K-D-E-L. The sequence is that of ER lumen protein-retaining receptor from Saccharomyces cerevisiae (strain ATCC 204508 / S288c) (Baker's yeast).